The chain runs to 336 residues: F420-dependent glucose-6-phosphate dehydrogenase (336 aa).

Asp-39 lines the coenzyme F420-(gamma-Glu)n pocket. The Proton donor role is filled by His-40. Coenzyme F420-(gamma-Glu)n is bound by residues Thr-76 and 107-108 (TG). Glu-109 acts as the Proton acceptor in catalysis. Coenzyme F420-(gamma-Glu)n-binding positions include Asn-112, 177-178 (GG), and 180-181 (LV). Thr-195, Lys-198, Lys-259, and Arg-283 together coordinate substrate.

The protein belongs to the F420-dependent glucose-6-phosphate dehydrogenase family. Homodimer.

The catalysed reaction is oxidized coenzyme F420-(gamma-L-Glu)(n) + D-glucose 6-phosphate + H(+) = 6-phospho-D-glucono-1,5-lactone + reduced coenzyme F420-(gamma-L-Glu)(n). Functionally, catalyzes the coenzyme F420-dependent oxidation of glucose 6-phosphate (G6P) to 6-phosphogluconolactone. This Nocardia farcinica (strain IFM 10152) protein is F420-dependent glucose-6-phosphate dehydrogenase.